We begin with the raw amino-acid sequence, 300 residues long: Porphobilinogen deaminase (300 aa).

The residue at position 242 (cysteine 242) is an S-(dipyrrolylmethanemethyl)cysteine.

It belongs to the HMBS family. Monomer. Dipyrromethane is required as a cofactor.

The catalysed reaction is 4 porphobilinogen + H2O = hydroxymethylbilane + 4 NH4(+). It functions in the pathway porphyrin-containing compound metabolism; protoporphyrin-IX biosynthesis; coproporphyrinogen-III from 5-aminolevulinate: step 2/4. Tetrapolymerization of the monopyrrole PBG into the hydroxymethylbilane pre-uroporphyrinogen in several discrete steps. This Blochmanniella pennsylvanica (strain BPEN) protein is Porphobilinogen deaminase.